The chain runs to 225 residues: Uracil-DNA glycosylase (225 aa).

Asp-65 acts as the Proton acceptor in catalysis.

This sequence belongs to the uracil-DNA glycosylase (UDG) superfamily. UNG family.

It localises to the cytoplasm. The enzyme catalyses Hydrolyzes single-stranded DNA or mismatched double-stranded DNA and polynucleotides, releasing free uracil.. Functionally, excises uracil residues from the DNA which can arise as a result of misincorporation of dUMP residues by DNA polymerase or due to deamination of cytosine. The chain is Uracil-DNA glycosylase from Clostridium perfringens (strain SM101 / Type A).